Consider the following 465-residue polypeptide: MSFIRLHKDAAATWLSRLLPAAIFILVGLFSIMVIRDYGRESAAARQTLLEKGNVLIRALESGTRVGMGMRMHHAQQQTLLEEMAGQPGVLWFAVTDAQGVIITHSNPGMVGKSLYSPSEMHQLNPGPQERWRRVDVAANGETVPALEIYRQFQPLFGMRGHGMRGHGMARSANDDEPAKQTIFIAFDASELAATQAREWRNTLIVLSALAAVLLATLLAFFWHQRYQRSHRELLDAMKRKEKLVAMGHLAAGVAHEIRNPLSSIKGLAKYFAERTPAGGESHELAQVMAKEADRLNRVVSELLELVKPAHLTLQTVNLNDIITHSLNLVSQDAQSREIQLRFTANETLKRIQADPDRLTQVLLNLYLNAIHAIGRQGTISVEAKESGTDRVIITVTDSGKGIAPDQLEAIFTPYFTTKADGTGLGLAVVQNIIEQHGGAIKVKSIEGKGAVFTIWLPVIARQQD.

The Cytoplasmic portion of the chain corresponds to 1–14 (MSFIRLHKDAAATW). Residues 15–35 (LSRLLPAAIFILVGLFSIMVI) form a helical membrane-spanning segment. Residues 36 to 202 (RDYGRESAAA…AATQAREWRN (167 aa)) are Periplasmic-facing. A helical membrane pass occupies residues 203-223 (TLIVLSALAAVLLATLLAFFW). The Cytoplasmic segment spans residues 224-465 (HQRYQRSHRE…WLPVIARQQD (242 aa)). The Histidine kinase domain occupies 253-461 (GVAHEIRNPL…VFTIWLPVIA (209 aa)). H256 is modified (phosphohistidine; by autocatalysis).

Post-translationally, autophosphorylated.

The protein localises to the cell inner membrane. It carries out the reaction ATP + protein L-histidine = ADP + protein N-phospho-L-histidine.. Activity of the ZraS/ZraR two-component system is repressed by the zinc-bound form of ZraP, which probably interacts with the periplasmic region of ZraS. In terms of biological role, part of the Zra signaling pathway, an envelope stress response (ESR) system composed of the periplasmic accessory protein ZraP, the histidine kinase ZraS and the transcriptional regulator ZraR. The ZraPSR system contributes to antibiotic resistance and is important for membrane integrity in the presence of membrane-targeting biocides. ZraS is a member of the two-component regulatory system ZraS/ZraR. Functions as a membrane-associated sensor kinase that phosphorylates ZraR in response to high concentrations of Zn(2+) or Pb(2+) in the medium. This chain is Sensor histidine kinase ZraS, found in Salmonella typhimurium (strain LT2 / SGSC1412 / ATCC 700720).